The chain runs to 352 residues: Histidine biosynthesis bifunctional protein HisB (352 aa).

The interval 1-164 (MSQKILFIDR…EIENEILSSF (164 aa)) is histidinol-phosphatase. Residue aspartate 9 is the Nucleophile of the active site. Residues aspartate 9 and aspartate 11 each coordinate Mg(2+). Aspartate 11 acts as the Proton donor in catalysis. Positions 93, 95, 101, and 103 each coordinate Zn(2+). Residue aspartate 130 participates in Mg(2+) binding. An imidazoleglycerol-phosphate dehydratase region spans residues 165 to 352 (RSASYQRTTK…ENLASSKGVI (188 aa)).

In the N-terminal section; belongs to the histidinol-phosphatase family. This sequence in the C-terminal section; belongs to the imidazoleglycerol-phosphate dehydratase family. Requires Mg(2+) as cofactor. It depends on Zn(2+) as a cofactor.

It is found in the cytoplasm. It carries out the reaction D-erythro-1-(imidazol-4-yl)glycerol 3-phosphate = 3-(imidazol-4-yl)-2-oxopropyl phosphate + H2O. The catalysed reaction is L-histidinol phosphate + H2O = L-histidinol + phosphate. It participates in amino-acid biosynthesis; L-histidine biosynthesis; L-histidine from 5-phospho-alpha-D-ribose 1-diphosphate: step 6/9. It functions in the pathway amino-acid biosynthesis; L-histidine biosynthesis; L-histidine from 5-phospho-alpha-D-ribose 1-diphosphate: step 8/9. This is Histidine biosynthesis bifunctional protein HisB from Campylobacter jejuni subsp. jejuni serotype O:6 (strain 81116 / NCTC 11828).